A 510-amino-acid polypeptide reads, in one-letter code: Insulinoma-associated protein 1 (510 aa).

Basic residues predominate over residues 1-12; sequence MPRGFLVKRSKK. An SNAG domain region spans residues 1–20; it reads MPRGFLVKRSKKSTPVSYRV. 2 disordered regions span residues 1–110 and 176–226; these read MPRG…SREH and GAEA…PKAI. The segment at 2–7 is required and sufficient for interaction with KDM1A; it reads PRGFLV. The interval 43 to 58 is necessary for interaction with CCND1; it reads PPAPSPVPGPLPPPPP. A compositionally biased stretch (pro residues) spans 43–59; it reads PPAPSPVPGPLPPPPPA. Composition is skewed to low complexity over residues 64-74 and 209-218; these read AALAAALACAP and EPPAKAVKAP. A C2H2-type 1; atypical zinc finger spans residues 267–287; it reads FICQLCKEEYADPFALAQHKC. The segment at 295–317 adopts a C2H2-type 2 zinc-finger fold; it reads YRCPECAKVFSCPANLASHRRWH. The tract at residues 315–362 is disordered; the sequence is RWHKPRPAPAAARAPEPEAAARAEAREAPGGGSDRDTPSPGGVSESGS. A compositionally biased stretch (basic and acidic residues) spans 329 to 351; sequence PEPEAAARAEAREAPGGGSDRDT. 3 C2H2-type zinc fingers span residues 367 to 389, 441 to 464, and 469 to 492; these read YECH…LLAH, HLCP…RLLH, and FPCK…NKCH.

This sequence belongs to the INSM1 family. Interacts (via the SNAG domain) with HDAC1. Interacts (via the SNAG domain) with HDAC2. Interacts (via the SNAG domain) with KDM1A. Interacts (via the SNAG domain) with RCOR1. Interacts with SORBS1. Interacts (via the N-terminal region) with CCND1 (via cyclin N-terminal domain); the interaction competes with the binding of CCND1 to CDK4 during cell cycle progression and increases its transcriptional repressor activity. Interacts with HDAC3; the interaction increases its transcriptional repressor activity. Expressed in pancreatic duct cells. Expressed in several tumor cell lines of neuroendocrine origin including pheochromocytoma, medullary thyroid carcinoma, insulinoma, medulloblastoma, retinoblastoma, pheochromacytoma, medullary thyroid carcinoma and small cell lung carcinoma.

Its subcellular location is the nucleus. Sequence-specific DNA-binding transcriptional regulator that plays a key role in neurogenesis and neuroendocrine cell differentiation during embryonic and/or fetal development. Binds to the consensus sequence 5'-[TG][TC][TC][TT][GA]GGG[CG]A-3' in target promoters. Acts as a transcriptional repressor of NEUROD1 and INS expression via its interaction with cyclin CCND1 in a cell cycle-independent manner. Negatively regulates skeletal muscle-specific gene expression in endocrine cells of the pituitary by inhibiting the Notch signaling pathway. Represses target gene transcription by recruiting chromatin-modifying factors, such as HDAC1, HDAC2, HDAC3, KDM1A and RCOR1 histone deacetylases. Binds to its own promoter, suggesting autoregulation as a self-control feedback mechanism. Competes with histone H3 for the same binding site on the histone demethylase complex formed by KDM1A and RCOR1, and thereby inhibits demethylation of histone H3 at 'Lys-4'. Promotes the generation and expansion of neuronal basal progenitor cells in the developing neocortex. Involved in the differentiation of endocrine cells of the developing anterior pituitary gland, of the pancreas and intestine, and of sympatho-adrenal cells in the peripheral nervous system. Promotes cell cycle signaling arrest and inhibition of cellular proliferation. The polypeptide is Insulinoma-associated protein 1 (INSM1) (Homo sapiens (Human)).